The following is a 297-amino-acid chain: Thiosulfate sulfurtransferase (297 aa).

An N6-acetyllysine; alternate modification is found at Lys-14. Lys-14 carries the N6-succinyllysine; alternate modification. Residues 25–143 (LGPGLRVLDA…WLKEGHPVTS (119 aa)) enclose the Rhodanese 1 domain. O-linked (GlcNAc) serine glycosylation occurs at Ser-35. Ser-38 is subject to Phosphoserine. Lys-136 is modified (N6-acetyllysine; alternate). N6-succinyllysine; alternate is present on Lys-136. Positions 144–159 (EPSRPEPAVFKATLDR) are hinge. Lys-163 is subject to N6-acetyllysine. A Rhodanese 2 domain is found at 173-288 (QSKRFQLVDS…WFHQAPPETR (116 aa)). Residue Lys-175 is modified to N6-acetyllysine; alternate. An N6-succinyllysine; alternate modification is found at Lys-175. Arg-187 contacts substrate. Lys-224 carries the post-translational modification N6-acetyllysine; alternate. At Lys-224 the chain carries N6-succinyllysine; alternate. Lys-236 is subject to N6-acetyllysine. Lys-237 is subject to N6-acetyllysine; alternate. At Lys-237 the chain carries N6-succinyllysine; alternate. Cys-248 acts as the Cysteine persulfide intermediate in catalysis. Lys-250 serves as a coordination point for substrate.

As to quaternary structure, monomer.

The protein localises to the mitochondrion matrix. It catalyses the reaction thiosulfate + hydrogen cyanide = thiocyanate + sulfite + 2 H(+). Functionally, together with MRPL18, acts as a mitochondrial import factor for the cytosolic 5S rRNA. Only the nascent unfolded cytoplasmic form is able to bind to the 5S rRNA. Formation of iron-sulfur complexes and cyanide detoxification. Binds molecular oxygen and sulfur. This Cricetulus griseus (Chinese hamster) protein is Thiosulfate sulfurtransferase (TST).